A 620-amino-acid chain; its full sequence is Glutathione-regulated potassium-efflux system protein KefC (620 aa).

Transmembrane regions (helical) follow at residues 4–24, 26–46, 54–74, 90–110, 114–134, 149–169, 178–198, 218–238, 270–290, 294–314, 327–347, and 359–379; these read HTLLQALIYLGSAALIVPIAV, LGLGSVLGYLIAGCIIGPWGL, SILHFAEIGVVLMLFVIGLEL, GALQMVVCGGLIGLFCMFLGL, VAELIGMTLALSSTAIAMQAM, FAVLLFQDIAAIPLVAMIPLL, LGAFALSALKVAGALALVVLL, VFSAVALFLVFGFGLLLEEVG, GLLLGLFFIGVGMSIDFGTLV, LRILLLLAGFLTIKIVMLWLV, WFAVLLGQGSEFAFVVFGAAQ, and ALTLAVALSMAATPIFLVLLT. The 120-residue stretch at 399–518 folds into the RCK N-terminal domain; that stretch reads QPRVIVAGFG…AGVAMPERET (120 aa). Residues 599 to 620 are disordered; the sequence is QGTAEGKHSGEAADEPEVKPSI.

It belongs to the monovalent cation:proton antiporter 2 (CPA2) transporter (TC 2.A.37) family. KefC subfamily. As to quaternary structure, homodimer. Interacts with the regulatory subunit KefF.

It is found in the cell inner membrane. Pore-forming subunit of a potassium efflux system that confers protection against electrophiles. Catalyzes K(+)/H(+) antiport. The polypeptide is Glutathione-regulated potassium-efflux system protein KefC (Salmonella schwarzengrund (strain CVM19633)).